Consider the following 108-residue polypeptide: Probable 4-amino-4-deoxy-L-arabinose-phosphoundecaprenol flippase subunit ArnE (108 aa).

The next 3 helical transmembrane spans lie at 32–52 (PLLLWLGGSVLLLGMAMLVWL), 58–78 (VPVGVAYPMLSLNFIFVTLAA), and 85–105 (TLSLRHALGVILIVAGVAIMG). Residues 34 to 106 (LLWLGGSVLL…IVAGVAIMGS (73 aa)) form the EamA domain.

It belongs to the ArnE family. Heterodimer of ArnE and ArnF.

The protein localises to the cell inner membrane. Its pathway is bacterial outer membrane biogenesis; lipopolysaccharide biosynthesis. Its function is as follows. Translocates 4-amino-4-deoxy-L-arabinose-phosphoundecaprenol (alpha-L-Ara4N-phosphoundecaprenol) from the cytoplasmic to the periplasmic side of the inner membrane. The polypeptide is Probable 4-amino-4-deoxy-L-arabinose-phosphoundecaprenol flippase subunit ArnE (Erwinia tasmaniensis (strain DSM 17950 / CFBP 7177 / CIP 109463 / NCPPB 4357 / Et1/99)).